A 243-amino-acid chain; its full sequence is Exosome complex component Rrp41 (243 aa).

Belongs to the RNase PH family. Rrp41 subfamily. In terms of assembly, component of the archaeal exosome complex. Forms a hexameric ring-like arrangement composed of 3 Rrp41-Rrp42 heterodimers. The hexameric ring associates with a trimer of Rrp4 and/or Csl4 subunits.

It localises to the cytoplasm. In terms of biological role, catalytic component of the exosome, which is a complex involved in RNA degradation. Has 3'-&gt;5' exoribonuclease activity. Can also synthesize heteromeric RNA-tails. This chain is Exosome complex component Rrp41, found in Cenarchaeum symbiosum (strain A).